Consider the following 277-residue polypeptide: uncharacterized protein (277 aa).

The segment at 139–167 (TARELSLDCSCPDYAVPCKHLAATFYLLA) adopts an SWIM-type zinc-finger fold.

This is an uncharacterized protein from Mycobacterium tuberculosis (strain ATCC 25618 / H37Rv).